Consider the following 294-residue polypeptide: Flavin-dependent thymidylate synthase (294 aa).

The ThyX domain maps to 27 to 250 (GFIRVIDYMG…PFVYEAFEEY (224 aa)). Residues Thr-73, 96-98 (RHR), and Glu-104 each bind FAD. Residues 93–96 (QWIR), 104–108 (EYSAR), and Arg-189 contribute to the dUMP site. The ThyX motif signature appears at 96-106 (RHRTASVNEYS). Residues 205–207 (NLH) and His-211 each bind FAD. Arg-216 serves as a coordination point for dUMP. Catalysis depends on Arg-216, which acts as the Involved in ionization of N3 of dUMP, leading to its activation.

Belongs to the thymidylate synthase ThyX family. Homotetramer. It depends on FAD as a cofactor.

The catalysed reaction is dUMP + (6R)-5,10-methylene-5,6,7,8-tetrahydrofolate + NADPH + H(+) = dTMP + (6S)-5,6,7,8-tetrahydrofolate + NADP(+). Its pathway is pyrimidine metabolism; dTTP biosynthesis. Its function is as follows. Catalyzes the reductive methylation of 2'-deoxyuridine-5'-monophosphate (dUMP) to 2'-deoxythymidine-5'-monophosphate (dTMP) while utilizing 5,10-methylenetetrahydrofolate (mTHF) as the methyl donor, and NADPH and FADH(2) as the reductant. The polypeptide is Flavin-dependent thymidylate synthase (Rickettsia conorii (strain ATCC VR-613 / Malish 7)).